Here is a 206-residue protein sequence, read N- to C-terminus: Peptidyl-tRNA hydrolase (206 aa).

Residue Y14 participates in tRNA binding. H19 serves as the catalytic Proton acceptor. Y64, N66, and N112 together coordinate tRNA.

Belongs to the PTH family. Monomer.

The protein localises to the cytoplasm. The catalysed reaction is an N-acyl-L-alpha-aminoacyl-tRNA + H2O = an N-acyl-L-amino acid + a tRNA + H(+). In terms of biological role, hydrolyzes ribosome-free peptidyl-tRNAs (with 1 or more amino acids incorporated), which drop off the ribosome during protein synthesis, or as a result of ribosome stalling. Its function is as follows. Catalyzes the release of premature peptidyl moieties from peptidyl-tRNA molecules trapped in stalled 50S ribosomal subunits, and thus maintains levels of free tRNAs and 50S ribosomes. The protein is Peptidyl-tRNA hydrolase of Rhodopseudomonas palustris (strain ATCC BAA-98 / CGA009).